We begin with the raw amino-acid sequence, 282 residues long: 1-deoxy-11-beta-hydroxypentalenate dehydrogenase (282 aa).

12–36 (GAASGIGLALSARFARAGAGVVMAD) provides a ligand contact to NAD(+). Serine 144 provides a ligand contact to substrate. The active-site Proton acceptor is tyrosine 157. An NAD(+)-binding site is contributed by lysine 161. Residues 258-282 (PPPSPEEELWPVPKTTTATTATTKH) form a disordered region. Positions 267–282 (WPVPKTTTATTATTKH) are enriched in low complexity.

This sequence belongs to the short-chain dehydrogenases/reductases (SDR) family.

It catalyses the reaction 1-deoxy-11beta-hydroxypentalenate + NAD(+) = 1-deoxy-11-oxopentalenate + NADH + H(+). It functions in the pathway antibiotic biosynthesis; pentalenolactone biosynthesis. In terms of biological role, catalyzes the oxidation of 1-deoxy-11-beta-hydroxypentalenic acid to 1-deoxy-11-oxopentalenic acid in the biosynthesis of pentalenolactone antibiotic. The polypeptide is 1-deoxy-11-beta-hydroxypentalenate dehydrogenase (pntF) (Streptomyces arenae).